Reading from the N-terminus, the 212-residue chain is 3-isopropylmalate dehydratase small subunit (212 aa).

Belongs to the LeuD family. LeuD type 1 subfamily. Heterodimer of LeuC and LeuD.

The enzyme catalyses (2R,3S)-3-isopropylmalate = (2S)-2-isopropylmalate. Its pathway is amino-acid biosynthesis; L-leucine biosynthesis; L-leucine from 3-methyl-2-oxobutanoate: step 2/4. Its function is as follows. Catalyzes the isomerization between 2-isopropylmalate and 3-isopropylmalate, via the formation of 2-isopropylmaleate. This is 3-isopropylmalate dehydratase small subunit from Pseudomonas aeruginosa (strain LESB58).